A 710-amino-acid polypeptide reads, in one-letter code: uncharacterized protein (710 aa).

Coiled coils occupy residues 273 to 298 (LYRQ…MEEG) and 477 to 528 (RYEK…VADT).

This is an uncharacterized protein from Coxiella burnetii (strain RSA 493 / Nine Mile phase I).